The primary structure comprises 874 residues: Alanine--tRNA ligase (874 aa).

His563, His567, Cys665, and His669 together coordinate Zn(2+).

The protein belongs to the class-II aminoacyl-tRNA synthetase family. It depends on Zn(2+) as a cofactor.

The protein localises to the cytoplasm. The catalysed reaction is tRNA(Ala) + L-alanine + ATP = L-alanyl-tRNA(Ala) + AMP + diphosphate. Functionally, catalyzes the attachment of alanine to tRNA(Ala) in a two-step reaction: alanine is first activated by ATP to form Ala-AMP and then transferred to the acceptor end of tRNA(Ala). Also edits incorrectly charged Ser-tRNA(Ala) and Gly-tRNA(Ala) via its editing domain. The polypeptide is Alanine--tRNA ligase (Haemophilus influenzae (strain PittGG)).